A 665-amino-acid polypeptide reads, in one-letter code: DNA ligase (665 aa).

NAD(+)-binding positions include 32 to 36 (DSEYD), 81 to 82 (SL), and glutamate 110. Residue lysine 112 is the N6-AMP-lysine intermediate of the active site. Arginine 133, glutamate 167, lysine 283, and lysine 307 together coordinate NAD(+). Residues cysteine 401, cysteine 404, cysteine 419, and cysteine 424 each contribute to the Zn(2+) site. A BRCT domain is found at 586-665 (EGHPDFSGKT…AAFIEKQNGI (80 aa)).

This sequence belongs to the NAD-dependent DNA ligase family. LigA subfamily. Mg(2+) serves as cofactor. Mn(2+) is required as a cofactor.

It catalyses the reaction NAD(+) + (deoxyribonucleotide)n-3'-hydroxyl + 5'-phospho-(deoxyribonucleotide)m = (deoxyribonucleotide)n+m + AMP + beta-nicotinamide D-nucleotide.. DNA ligase that catalyzes the formation of phosphodiester linkages between 5'-phosphoryl and 3'-hydroxyl groups in double-stranded DNA using NAD as a coenzyme and as the energy source for the reaction. It is essential for DNA replication and repair of damaged DNA. The sequence is that of DNA ligase from Staphylococcus epidermidis (strain ATCC 35984 / DSM 28319 / BCRC 17069 / CCUG 31568 / BM 3577 / RP62A).